We begin with the raw amino-acid sequence, 118 residues long: Large ribosomal subunit protein bL19 (118 aa).

It belongs to the bacterial ribosomal protein bL19 family.

Its function is as follows. This protein is located at the 30S-50S ribosomal subunit interface and may play a role in the structure and function of the aminoacyl-tRNA binding site. This Campylobacter jejuni subsp. jejuni serotype O:2 (strain ATCC 700819 / NCTC 11168) protein is Large ribosomal subunit protein bL19.